The chain runs to 293 residues: 4-hydroxy-tetrahydrodipicolinate synthase (293 aa).

Threonine 45 is a pyruvate binding site. Tyrosine 133 acts as the Proton donor/acceptor in catalysis. Lysine 161 acts as the Schiff-base intermediate with substrate in catalysis. Pyruvate is bound at residue isoleucine 203.

This sequence belongs to the DapA family. Homotetramer; dimer of dimers.

Its subcellular location is the cytoplasm. It carries out the reaction L-aspartate 4-semialdehyde + pyruvate = (2S,4S)-4-hydroxy-2,3,4,5-tetrahydrodipicolinate + H2O + H(+). It participates in amino-acid biosynthesis; L-lysine biosynthesis via DAP pathway; (S)-tetrahydrodipicolinate from L-aspartate: step 3/4. In terms of biological role, catalyzes the condensation of (S)-aspartate-beta-semialdehyde [(S)-ASA] and pyruvate to 4-hydroxy-tetrahydrodipicolinate (HTPA). This chain is 4-hydroxy-tetrahydrodipicolinate synthase, found in Exiguobacterium sibiricum (strain DSM 17290 / CCUG 55495 / CIP 109462 / JCM 13490 / 255-15).